The primary structure comprises 192 residues: uncharacterized protein (192 aa).

Belongs to the IIV-6 358L family.

This is an uncharacterized protein from Aedes vexans (Inland floodwater mosquito).